The following is a 510-amino-acid chain: 2,3-bisphosphoglycerate-independent phosphoglycerate mutase (510 aa).

Mn(2+) is bound by residues aspartate 11 and serine 61. Serine 61 functions as the Phosphoserine intermediate in the catalytic mechanism. Substrate contacts are provided by residues histidine 124, 154-155, arginine 185, arginine 191, 260-263, and lysine 333; these read RD and RPDR. Residues aspartate 398, histidine 402, aspartate 439, histidine 440, and histidine 457 each contribute to the Mn(2+) site.

Belongs to the BPG-independent phosphoglycerate mutase family. Monomer. It depends on Mn(2+) as a cofactor.

The enzyme catalyses (2R)-2-phosphoglycerate = (2R)-3-phosphoglycerate. The protein operates within carbohydrate degradation; glycolysis; pyruvate from D-glyceraldehyde 3-phosphate: step 3/5. Catalyzes the interconversion of 2-phosphoglycerate and 3-phosphoglycerate. The polypeptide is 2,3-bisphosphoglycerate-independent phosphoglycerate mutase (Mycoplasma mobile (strain ATCC 43663 / 163K / NCTC 11711) (Mesomycoplasma mobile)).